A 700-amino-acid chain; its full sequence is Elongation factor G 1 (700 aa).

In terms of domain architecture, tr-type G spans 8-290; that stretch reads QNYRNIGISA…AVIEFMPSPI (283 aa). Residues 17 to 24, 88 to 92, and 142 to 145 contribute to the GTP site; these read AHIDAGKT, DTPGH, and NKMD.

This sequence belongs to the TRAFAC class translation factor GTPase superfamily. Classic translation factor GTPase family. EF-G/EF-2 subfamily.

The protein localises to the cytoplasm. Catalyzes the GTP-dependent ribosomal translocation step during translation elongation. During this step, the ribosome changes from the pre-translocational (PRE) to the post-translocational (POST) state as the newly formed A-site-bound peptidyl-tRNA and P-site-bound deacylated tRNA move to the P and E sites, respectively. Catalyzes the coordinated movement of the two tRNA molecules, the mRNA and conformational changes in the ribosome. The protein is Elongation factor G 1 of Polaromonas sp. (strain JS666 / ATCC BAA-500).